The primary structure comprises 277 residues: Phosphate import ATP-binding protein PstB (277 aa).

One can recognise an ABC transporter domain in the interval 31–272; sequence LEVPGLNLFY…PAKKQTEDYI (242 aa). 63–70 is a binding site for ATP; sequence GPSGCGKS.

Belongs to the ABC transporter superfamily. Phosphate importer (TC 3.A.1.7) family. In terms of assembly, the complex is composed of two ATP-binding proteins (PstB), two transmembrane proteins (PstC and PstA) (Potential). PstS is missing in this species.

The protein localises to the cell inner membrane. It catalyses the reaction phosphate(out) + ATP + H2O = ADP + 2 phosphate(in) + H(+). Its function is as follows. Part of the ABC transporter complex PstSACB involved in phosphate import. Responsible for energy coupling to the transport system. This Pseudomonas aeruginosa (strain ATCC 15692 / DSM 22644 / CIP 104116 / JCM 14847 / LMG 12228 / 1C / PRS 101 / PAO1) protein is Phosphate import ATP-binding protein PstB.